The following is a 248-amino-acid chain: Probable proteasome subunit alpha type-3 (248 aa).

The protein belongs to the peptidase T1A family. In terms of assembly, the 26S proteasome consists of a 20S proteasome core and two 19S regulatory subunits. The 20S proteasome core is composed of 28 subunits that are arranged in four stacked rings, resulting in a barrel-shaped structure. The two end rings are each formed by seven alpha subunits, and the two central rings are each formed by seven beta subunits. The catalytic chamber with the active sites is on the inside of the barrel.

It is found in the cytoplasm. The protein localises to the nucleus. Its function is as follows. The proteasome is a multicatalytic proteinase complex which is characterized by its ability to cleave peptides with Arg, Phe, Tyr, Leu, and Glu adjacent to the leaving group at neutral or slightly basic pH. The proteasome has an ATP-dependent proteolytic activity. This is Probable proteasome subunit alpha type-3 from Schizosaccharomyces pombe (strain 972 / ATCC 24843) (Fission yeast).